The chain runs to 1374 residues: Y' element ATP-dependent helicase YLL067C (1374 aa).

A disordered region spans residues 321-345 (AGEAASSDHDQKISRVTRKRPREPK). The region spanning 375–552 (EIYMADTPSV…LQRIGLTGLA (178 aa)) is the Helicase ATP-binding domain. 388–395 (APPGYGKT) lines the ATP pocket. A DEAH box motif is present at residues 498 to 501 (DEFH). One can recognise a Helicase C-terminal domain in the interval 609–758 (KLLLALFEIE…EFYGLESKKG (150 aa)). The segment covering 832–1011 (ANASTNATTN…ATTTESTNAS (180 aa)) has biased composition (low complexity). Residues 832–1035 (ANASTNATTN…RFHPVTDINK (204 aa)) form a disordered region. Positions 1012-1035 (AKEDANKDGNAEDNRFHPVTDINK) are enriched in basic and acidic residues.

The protein belongs to the helicase family. Yeast subtelomeric Y' repeat subfamily.

Its function is as follows. Catalyzes DNA unwinding and is involved in telomerase-independent telomere maintenance. The protein is Y' element ATP-dependent helicase YLL067C of Saccharomyces cerevisiae (strain ATCC 204508 / S288c) (Baker's yeast).